The following is a 128-amino-acid chain: uncharacterized protein (128 aa).

Positions 5–128 (SIHHIAIICS…DQLPLELYEQ (124 aa)) constitute a VOC domain. A divalent metal cation is bound by residues His-8, Glu-56, His-77, and Glu-124.

This is an uncharacterized protein from Bacillus subtilis (strain 168).